The primary structure comprises 358 residues: Peptide chain release factor 1 (358 aa).

Gln236 is modified (N5-methylglutamine).

Belongs to the prokaryotic/mitochondrial release factor family. Post-translationally, methylated by PrmC. Methylation increases the termination efficiency of RF1.

The protein localises to the cytoplasm. Peptide chain release factor 1 directs the termination of translation in response to the peptide chain termination codons UAG and UAA. In Corynebacterium efficiens (strain DSM 44549 / YS-314 / AJ 12310 / JCM 11189 / NBRC 100395), this protein is Peptide chain release factor 1.